Consider the following 465-residue polypeptide: Lysophospholipid acyltransferase 2 (465 aa).

9 helical membrane-spanning segments follow: residues 15–35, 55–75, 86–106, 161–181, 214–234, 266–286, 356–376, 399–419, and 434–454; these read VSVA…ISFL, FLSY…PMTI, LSGF…HVFY, SLIE…GPVF, AVFQ…QFPL, YFIW…FSGW, AVWH…ALMI, VLVL…SVGF, and VYYI…LVPV. Histidine 359 is an active-site residue.

It belongs to the membrane-bound acyltransferase family. Interacts with GPAT9 and DGAT1. In terms of tissue distribution, expressed in rosette leaves, pollen grains, developing embryos and developing seeds.

Its subcellular location is the endoplasmic reticulum membrane. It catalyses the reaction a 1-acyl-sn-glycero-3-phosphocholine + an acyl-CoA = a 1,2-diacyl-sn-glycero-3-phosphocholine + CoA. The catalysed reaction is 1-(9Z-octadecenoyl)-sn-glycero-3-phosphocholine + (9Z)-octadecenoyl-CoA = 1,2-di-(9Z-octadecenoyl)-sn-glycero-3-phosphocholine + CoA. The enzyme catalyses 1-(9Z-octadecenoyl)-sn-glycero-3-phosphocholine + (9Z,12Z)-octadecadienoyl-CoA = 1-(9Z)-octadecenoyl-2-(9Z,12Z)-octadecadienoyl-sn-glycero-3-phosphocholine + CoA. It carries out the reaction (9Z,12Z,15Z)-octadecatrienoyl-CoA + 1-(9Z-octadecenoyl)-sn-glycero-3-phosphocholine = 1-(9Z-octadecaenoyl)-2-(9Z,12Z,15Z-octadecatrienoyl)-sn-glycero-3-phosphocholine + CoA. It catalyses the reaction a 1-acyl-sn-glycero-3-phosphoethanolamine + an acyl-CoA = a 1,2-diacyl-sn-glycero-3-phosphoethanolamine + CoA. The catalysed reaction is a 1-acyl-sn-glycero-3-phospho-L-serine + an acyl-CoA = a 1,2-diacyl-sn-glycero-3-phospho-L-serine + CoA. Lysophospholipid acyltransferase with broad specificity. Mediates the conversion of lysophosphatidylethanolamine (1-acyl-sn-glycero-3-phosphoethanolamine or LPE) into phosphatidylethanolamine (1,2-diacyl-sn-glycero-3-phosphoethanolamine or PE) (LPEAT activity). Catalyzes the acylation of lysophosphatidylserine (1-acyl-2-hydroxy-sn-glycero-3-phospho-L-serine or LPS) into phosphatidylserine (1,2-diacyl-sn-glycero-3-phospho-L-serine or PS) (LPSAT activity). Can convert lysophosphatidylcholine (1-acyl-sn-glycero-3-phosphocholine or LPC) into phosphatidylcholine (1,2-diacyl-sn-glycero-3-phosphocholine or PC) (LPCAT activity). Exhibits preference for C18-unsaturated acyl-CoA when transferring an acyl group to lysophosphatidylcholine. Can also utilize lysophosphatidylglycerol (LPG) as substrate in vitro. Has neither activity towards lysophosphatidic acid (LPA) nor lysophosphatidylinositol (LPI). Lysophospholipid acyltransferases catalyze the reacylation step of the phospholipid remodeling pathway also known as the Lands cycle. The primary function of the Lands cycle is to provide a route for acyl remodeling to modify fatty acid (FA) composition of phospholipids derived from the Kennedy pathway. Is involved in PC acyl editing and phosphocholine headgroup exchange between PC and diacylglycerols. This processes control the majority of acyl fluxes through PC to provide polyunsaturated fatty acids for triacylglycerols synthesis in seeds. Involved with LPCAT1 in the direct incorporation of newly synthesized fatty acids exported form the chloroplast into PC through acyl editing. This is Lysophospholipid acyltransferase 2 from Arabidopsis thaliana (Mouse-ear cress).